A 344-amino-acid polypeptide reads, in one-letter code: Inositol 2-dehydrogenase/D-chiro-inositol 3-dehydrogenase (344 aa).

This sequence belongs to the Gfo/Idh/MocA family. In terms of assembly, homotetramer.

It catalyses the reaction myo-inositol + NAD(+) = scyllo-inosose + NADH + H(+). The enzyme catalyses 1D-chiro-inositol + NAD(+) = scyllo-inosine + NADH + H(+). The protein operates within polyol metabolism; myo-inositol degradation into acetyl-CoA; acetyl-CoA from myo-inositol: step 1/7. Its function is as follows. Involved in the oxidation of myo-inositol (MI) and D-chiro-inositol (DCI) to 2-keto-myo-inositol (2KMI or 2-inosose) and 1-keto-D-chiro-inositol (1KDCI), respectively. The chain is Inositol 2-dehydrogenase/D-chiro-inositol 3-dehydrogenase from Bacillus velezensis (strain DSM 23117 / BGSC 10A6 / LMG 26770 / FZB42) (Bacillus amyloliquefaciens subsp. plantarum).